Consider the following 235-residue polypeptide: Sugar fermentation stimulation protein homolog (235 aa).

The protein belongs to the SfsA family.

In Alkaliphilus oremlandii (strain OhILAs) (Clostridium oremlandii (strain OhILAs)), this protein is Sugar fermentation stimulation protein homolog.